The chain runs to 533 residues: Lymphocyte cytosolic protein 2 (533 aa).

The region spanning 15-81 (WDPDSLADYF…INKNEERRSI (67 aa)) is the SAM domain. Residue tyrosine 23 is modified to Phosphotyrosine. A disordered region spans residues 78–417 (RRSIFTRKPQ…PPSPAEEENS (340 aa)). The span at 108-155 (FEEDDYESPNDDQDGEDDGDYESPNEEEEAPVEDDADYEPPPSNDEEA) shows a compositional bias: acidic residues. A compositionally biased stretch (pro residues) spans 184-213 (QQPPVPPQRPMAALPPPPAGRNHSPLPPPQ). Position 207 is a phosphoserine (serine 207). 2 stretches are compositionally biased toward polar residues: residues 337-350 (MSSN…TKPS) and 365-376 (SESNSSFPQSAS). A phosphoserine mark is found at serine 376 and serine 410. The span at 400 to 411 (LPLPNKPRPPSP) shows a compositional bias: pro residues. The 109-residue stretch at 422-530 (WYVSYITRPE…RYQCTLTHAA (109 aa)) folds into the SH2 domain.

In terms of assembly, interacts with SLA. Interacts with CBLB. Interacts with GRB2. Interacts with SHB. Interacts with PRAM1. Interacts (via SH2 domain) with CD6 (via tyrosine phosphorylated C-terminus). Interacts with FYB1 and the phosphorylated form of FYB2. Interacts with 14-3-3 adapter/YWHAZ; this phosphorylation leads to YWHAZ proteolytic degradation. Interacts with VAV1; this interaction plays a role in TCR-mediated cytokine production. Interacts with AGER; this interaction plays an important role in AGER-mediated pro-inflammatory responses and cytokine release. In terms of processing, phosphorylated after T-cell receptor activation by ZAP70, ITK and TXK, which leads to the up-regulation of Th1 preferred cytokine IL-2. SYK-dependent phosphorylation is required for recruitment of PI3K signaling components. As to expression, highly expressed in spleen, thymus and peripheral blood leukocytes. Highly expressed also in T-cell and monocytic cell lines, expressed at lower level in B-cell lines. Not detected in fibroblast or neuroblastoma cell lines.

It is found in the cytoplasm. Adapter protein primarily involved in signaling pathways within T-cells, as well as other immune cells such as platelets, mast cells, and natural killer (NK) cells. Plays a crucial role for transducing signal from the T-cell receptor (TCR) after antigen recognition leading to T-cell activation. Mechanistically, once phosphorylated by the kinase ZAP70, mediates interactions with the guanine-nucleotide exchange factor VAV1, the adapter protein NCK and the kinase ITK. In turn, stimulates the activation of PKC-theta/PRKCQ and NF-kappa-B transcriptional activity in response to CD3 and CD28 costimulation. Also plays an essential role in AGER-induced signaling pathways including p38 MAPK and ERK1/2 activation leading to cytokine release and pro-inflammatory responses. This is Lymphocyte cytosolic protein 2 (LCP2) from Homo sapiens (Human).